Consider the following 196-residue polypeptide: NADH-quinone oxidoreductase subunit C (196 aa).

It belongs to the complex I 30 kDa subunit family. As to quaternary structure, NDH-1 is composed of 14 different subunits. Subunits NuoB, C, D, E, F, and G constitute the peripheral sector of the complex.

The protein resides in the cell inner membrane. The catalysed reaction is a quinone + NADH + 5 H(+)(in) = a quinol + NAD(+) + 4 H(+)(out). NDH-1 shuttles electrons from NADH, via FMN and iron-sulfur (Fe-S) centers, to quinones in the respiratory chain. The immediate electron acceptor for the enzyme in this species is believed to be ubiquinone. Couples the redox reaction to proton translocation (for every two electrons transferred, four hydrogen ions are translocated across the cytoplasmic membrane), and thus conserves the redox energy in a proton gradient. The sequence is that of NADH-quinone oxidoreductase subunit C from Rickettsia bellii (strain RML369-C).